A 512-amino-acid chain; its full sequence is Vacuolar protein sorting-associated protein 30 (512 aa).

The segment at 294–511 (TNIYNESFRI…LVFCSSKLSL (218 aa)) is BARA.

This sequence belongs to the beclin family. In terms of assembly, component of the autophagy-specific VPS34 PI3-kinase complex I composed of VPS15, VPS30, VPS34, ATG14 and ATG38; and of the VPS34 PI3-kinase complex II composed of VPS15, VPS30, VPS34 and VPS38.

The protein resides in the endosome membrane. It localises to the vacuole membrane. The protein localises to the preautophagosomal structure membrane. Functionally, required for cytoplasm to vacuole transport (Cvt), autophagy, nucleophagy, and mitophagy, as a part of the autophagy-specific VPS34 PI3-kinase complex I. This complex is essential to recruit the ATG8-phosphatidylinositol conjugate and the ATG12-ATG5 conjugate to the pre-autophagosomal structure. Also involved in endosome-to-Golgi retrograde transport as part of the VPS34 PI3-kinase complex II. This second complex is required for the endosome-to-Golgi retrieval of PEP1 and KEX2, and the recruitment of VPS5 and VPS7, two components of the retromer complex, to endosomal membranes (probably through the synthesis of a specific pool of phosphatidylinositol 3-phosphate recruiting the retromer to the endosomes). Required for survival and/or proliferation in kidneys but not brain. In Candida glabrata (strain ATCC 2001 / BCRC 20586 / JCM 3761 / NBRC 0622 / NRRL Y-65 / CBS 138) (Yeast), this protein is Vacuolar protein sorting-associated protein 30.